Consider the following 299-residue polypeptide: 4-diphosphocytidyl-2-C-methyl-D-erythritol kinase (299 aa).

Lys11 is a catalytic residue. Residue 94–104 (PQGGGLGGGSS) coordinates ATP. Residue Asp136 is part of the active site.

This sequence belongs to the GHMP kinase family. IspE subfamily.

The catalysed reaction is 4-CDP-2-C-methyl-D-erythritol + ATP = 4-CDP-2-C-methyl-D-erythritol 2-phosphate + ADP + H(+). The protein operates within isoprenoid biosynthesis; isopentenyl diphosphate biosynthesis via DXP pathway; isopentenyl diphosphate from 1-deoxy-D-xylulose 5-phosphate: step 3/6. In terms of biological role, catalyzes the phosphorylation of the position 2 hydroxy group of 4-diphosphocytidyl-2C-methyl-D-erythritol. This is 4-diphosphocytidyl-2-C-methyl-D-erythritol kinase from Bordetella parapertussis (strain 12822 / ATCC BAA-587 / NCTC 13253).